A 109-amino-acid chain; its full sequence is UPF0449 protein C19orf25 homolog (109 aa).

Phosphotyrosine is present on Tyr63.

This sequence belongs to the UPF0449 family.

This chain is UPF0449 protein C19orf25 homolog, found in Rattus norvegicus (Rat).